We begin with the raw amino-acid sequence, 423 residues long: Vitamin D3 receptor (423 aa).

C24, C27, C41, C44, C60, C66, C76, and C79 together coordinate Zn(2+). 2 consecutive NR C4-type zinc fingers follow at residues 24 to 44 and 60 to 84; these read CGVC…CEGC and CPFN…LKRC. The segment at residues 24–89 is a DNA-binding region (nuclear receptor); the sequence is CGVCGDRATG…RLKRCVDIGM (66 aa). Positions 97–126 are hinge; that stretch reads DEEVQRKREMIMKRKEEEALKDSLRPKLSE. The 293-residue stretch at 127–419 folds into the NR LBD domain; sequence EQQHIIAILL…LTPLVLEVFG (293 aa). Y143 is a binding site for calcitriol. A disordered region spans residues 159 to 180; sequence MDGSTGSYSPRPTLSFSGNSSS. Positions 171 to 180 are enriched in low complexity; the sequence is TLSFSGNSSS. S233 is a calcitriol binding site. Residues 242–260 are interaction with coactivator LXXLL motif; sequence KMIPGFRDLTSDDQIVLLK. Calcitriol is bound by residues R270, S274, H301, and H393. A 9aaTAD motif is present at residues 412–420; sequence PLVLEVFGN.

The protein belongs to the nuclear hormone receptor family. NR1 subfamily. Homodimer in the absence of bound vitamin D3. Heterodimer with RXRA after vitamin D3 binding. Interacts with MED1 and NCOA6. Interacts with MED1, NCOA1, NCOA2, NCOA3 and NCOA6 coactivators, leading to a strong increase of transcription of target genes. Interacts with the corepressor NCOR1. Interacts with SNW1. Interacts with IRX4, the interaction does not affect its transactivation activity. Interacts with CRY1. Interacts with CRY2 in a ligand-dependent manner. Ubiquitinated by UBR5, leading to its degradation: UBR5 specifically recognizes and binds ligand-bound VDR when it is not associated with coactivators (NCOAs). In presence of NCOAs, the UBR5-degron is not accessible, preventing its ubiquitination and degradation. In terms of tissue distribution, detected in intestine and kidney.

The protein localises to the nucleus. It is found in the cytoplasm. In terms of biological role, nuclear receptor for calcitriol, the active form of vitamin D3 which mediates the action of this vitamin on cells. Enters the nucleus upon vitamin D3 binding where it forms heterodimers with the retinoid X receptor/RXR. The VDR-RXR heterodimers bind to specific response elements on DNA and activate the transcription of vitamin D3-responsive target genes. Plays a central role in calcium homeostasis. Also functions as a receptor for the secondary bile acid lithocholic acid (LCA) and its metabolites. This is Vitamin D3 receptor (Vdr) from Rattus norvegicus (Rat).